A 333-amino-acid chain; its full sequence is GTP 3',8-cyclase (333 aa).

In terms of domain architecture, Radical SAM core spans 7-221 (KFGRVHDYIR…FEACDAIGFE (215 aa)). R16 is a binding site for GTP. C23 and C27 together coordinate [4Fe-4S] cluster. Y29 contributes to the S-adenosyl-L-methionine binding site. Position 30 (C30) interacts with [4Fe-4S] cluster. R66 serves as a coordination point for GTP. Residue G70 coordinates S-adenosyl-L-methionine. Residue T97 participates in GTP binding. S121 is a binding site for S-adenosyl-L-methionine. A GTP-binding site is contributed by K158. M192 is a binding site for S-adenosyl-L-methionine. 2 residues coordinate [4Fe-4S] cluster: C257 and C260. Position 262 to 264 (262 to 264 (RLR)) interacts with GTP. C274 provides a ligand contact to [4Fe-4S] cluster.

The protein belongs to the radical SAM superfamily. MoaA family. As to quaternary structure, monomer and homodimer. It depends on [4Fe-4S] cluster as a cofactor.

The catalysed reaction is GTP + AH2 + S-adenosyl-L-methionine = (8S)-3',8-cyclo-7,8-dihydroguanosine 5'-triphosphate + 5'-deoxyadenosine + L-methionine + A + H(+). Its pathway is cofactor biosynthesis; molybdopterin biosynthesis. Functionally, catalyzes the cyclization of GTP to (8S)-3',8-cyclo-7,8-dihydroguanosine 5'-triphosphate. The protein is GTP 3',8-cyclase of Listeria welshimeri serovar 6b (strain ATCC 35897 / DSM 20650 / CCUG 15529 / CIP 8149 / NCTC 11857 / SLCC 5334 / V8).